A 95-amino-acid polypeptide reads, in one-letter code: Aspartyl/glutamyl-tRNA(Asn/Gln) amidotransferase subunit C (95 aa).

It belongs to the GatC family. As to quaternary structure, heterotrimer of A, B and C subunits.

The catalysed reaction is L-glutamyl-tRNA(Gln) + L-glutamine + ATP + H2O = L-glutaminyl-tRNA(Gln) + L-glutamate + ADP + phosphate + H(+). It carries out the reaction L-aspartyl-tRNA(Asn) + L-glutamine + ATP + H2O = L-asparaginyl-tRNA(Asn) + L-glutamate + ADP + phosphate + 2 H(+). Its function is as follows. Allows the formation of correctly charged Asn-tRNA(Asn) or Gln-tRNA(Gln) through the transamidation of misacylated Asp-tRNA(Asn) or Glu-tRNA(Gln) in organisms which lack either or both of asparaginyl-tRNA or glutaminyl-tRNA synthetases. The reaction takes place in the presence of glutamine and ATP through an activated phospho-Asp-tRNA(Asn) or phospho-Glu-tRNA(Gln). This is Aspartyl/glutamyl-tRNA(Asn/Gln) amidotransferase subunit C from Rhodopseudomonas palustris (strain BisA53).